A 92-amino-acid polypeptide reads, in one-letter code: Sarcosine oxidase subunit delta (92 aa).

Positions 7, 10, 57, and 61 each coordinate Zn(2+).

Belongs to the SoxD family. In terms of assembly, heterotetramer composed of subunits alpha (SoxA), beta (SoxB), gamma (SoxG) and delta (SoxD).

It localises to the cytoplasm. It catalyses the reaction sarcosine + (6S)-5,6,7,8-tetrahydrofolate + O2 = (6R)-5,10-methylene-5,6,7,8-tetrahydrofolate + glycine + H2O2. The enzyme catalyses sarcosine + O2 + H2O = formaldehyde + glycine + H2O2. Its function is as follows. In the presence of tetrahydrofolate, catalyzes the oxidative demethylation of sarcosine to yield glycine, 5,10-methylenetetrahydrofolate and hydrogen peroxide. In the absence of tetrahydrofolate, catalyzes the oxidative demethylation of sarcosine to yield glycine, formaldehyde and hydrogen peroxide. The protein is Sarcosine oxidase subunit delta (soxD) of Rhizobium meliloti (strain 1021) (Ensifer meliloti).